Reading from the N-terminus, the 577-residue chain is Methionine--tRNA ligase (577 aa).

Residues 21–31 (PYANGPLHVGH) carry the 'HIGH' region motif. Zn(2+) contacts are provided by Cys153, Cys156, Cys166, and Cys169. The short motif at 355–359 (QMSTS) is the 'KMSKS' region element. Thr358 contacts ATP.

This sequence belongs to the class-I aminoacyl-tRNA synthetase family. MetG type 1 subfamily. As to quaternary structure, monomer. The cofactor is Zn(2+).

Its subcellular location is the cytoplasm. The enzyme catalyses tRNA(Met) + L-methionine + ATP = L-methionyl-tRNA(Met) + AMP + diphosphate. Is required not only for elongation of protein synthesis but also for the initiation of all mRNA translation through initiator tRNA(fMet) aminoacylation. The sequence is that of Methionine--tRNA ligase from Rubrobacter xylanophilus (strain DSM 9941 / JCM 11954 / NBRC 16129 / PRD-1).